Reading from the N-terminus, the 81-residue chain is Putative defensin-like protein 56 (81 aa).

An N-terminal signal peptide occupies residues 1-23 (MNITKAYVIFFLVVILTNSLSNS). 4 disulfide bridges follow: Cys-46–Cys-80, Cys-50–Cys-73, Cys-59–Cys-78, and Cys-63–Cys-79.

This sequence belongs to the DEFL family.

It is found in the secreted. The sequence is that of Putative defensin-like protein 56 from Arabidopsis thaliana (Mouse-ear cress).